The following is a 252-amino-acid chain: ATP synthase subunit a (252 aa).

The next 7 membrane-spanning stretches (helical) occupy residues 6 to 26, 31 to 51, 88 to 108, 117 to 137, 144 to 164, 190 to 212, and 225 to 245; these read LEQFAIIQLIPIHIGNLYFSF, LFMLLTISLVLLLVHFVTLNG, FFPLIYVTFTFLLFCNLIGMI, HFIITLGLSFSLFIGITIVGF, FFSILLPQGVPLPLAPFLVLL, LVKILSGFAWTMLSMGGILYLGQ, and LELGVAILQAYVFTILLCIYL.

This sequence belongs to the ATPase A chain family. As to quaternary structure, F-type ATPases have 2 components, CF(1) - the catalytic core - and CF(0) - the membrane proton channel. CF(1) has five subunits: alpha(3), beta(3), gamma(1), delta(1), epsilon(1). CF(0) has three main subunits: a, b and c.

The protein resides in the mitochondrion inner membrane. Its function is as follows. Mitochondrial membrane ATP synthase (F(1)F(0) ATP synthase or Complex V) produces ATP from ADP in the presence of a proton gradient across the membrane which is generated by electron transport complexes of the respiratory chain. F-type ATPases consist of two structural domains, F(1) - containing the extramembraneous catalytic core and F(0) - containing the membrane proton channel, linked together by a central stalk and a peripheral stalk. During catalysis, ATP synthesis in the catalytic domain of F(1) is coupled via a rotary mechanism of the central stalk subunits to proton translocation. Key component of the proton channel; it may play a direct role in the translocation of protons across the membrane. The sequence is that of ATP synthase subunit a (ATP6) from Marchantia polymorpha (Common liverwort).